The chain runs to 317 residues: Carbonic anhydrase 5B, mitochondrial (317 aa).

The N-terminal 33 residues, 1-33 (MAVMNHLRVILQVSSSTLPWRRCWVPRLVPRRS), are a transit peptide targeting the mitochondrion. Residues 37 to 296 (YTCTYRTRNR…LMNRTVRSSF (260 aa)) form the Alpha-carbonic anhydrase domain. Zn(2+)-binding residues include histidine 130, histidine 132, and histidine 155. 235-236 (TT) provides a ligand contact to substrate.

The protein belongs to the alpha-carbonic anhydrase family. Requires Zn(2+) as cofactor. As to expression, expressed in the heart, liver, lung, kidney, testis, and skeletal muscle (at protein level).

It is found in the mitochondrion. It catalyses the reaction hydrogencarbonate + H(+) = CO2 + H2O. Mitochondrial carbonic anhydrase that catalyzes the reversible conversion of carbon dioxide to bicarbonate/HCO3. The polypeptide is Carbonic anhydrase 5B, mitochondrial (Ca5b) (Mus musculus (Mouse)).